Consider the following 380-residue polypeptide: Chaperone protein DnaJ (380 aa).

Residues Asp-5–Gly-70 form the J domain. The CR-type zinc finger occupies Gly-140–Thr-218. Residues Cys-153, Cys-156, Cys-170, Cys-173, Cys-192, Cys-195, Cys-206, and Cys-209 each contribute to the Zn(2+) site. CXXCXGXG motif repeat units lie at residues Cys-153–Gly-160, Cys-170–Gly-177, Cys-192–Gly-199, and Cys-206–Gly-213.

It belongs to the DnaJ family. As to quaternary structure, homodimer. Requires Zn(2+) as cofactor.

Its subcellular location is the cytoplasm. Its function is as follows. Participates actively in the response to hyperosmotic and heat shock by preventing the aggregation of stress-denatured proteins and by disaggregating proteins, also in an autonomous, DnaK-independent fashion. Unfolded proteins bind initially to DnaJ; upon interaction with the DnaJ-bound protein, DnaK hydrolyzes its bound ATP, resulting in the formation of a stable complex. GrpE releases ADP from DnaK; ATP binding to DnaK triggers the release of the substrate protein, thus completing the reaction cycle. Several rounds of ATP-dependent interactions between DnaJ, DnaK and GrpE are required for fully efficient folding. Also involved, together with DnaK and GrpE, in the DNA replication of plasmids through activation of initiation proteins. The chain is Chaperone protein DnaJ from Paraburkholderia xenovorans (strain LB400).